The primary structure comprises 402 residues: MNGKSSVLDSAPEYVDKKKYFWILSTFWPATPMIGIWLANETGWGIFYGLVLAVWYGVLPLLDAMFGEDFNNPPEEVVEKLEKERYYRVLTYLTVPMHYAALIVSAWWVGTQSMSWFEIVALALSLGIVNGLALNTGHELGHKKEAFDRWMAKIVLAVVGYGHFFIEHNKGHHRDVATPMDPATSRMGENIYKFSTREIPGAFRRAWGLEEQRLSRRGQSVWSFDNEILQPMVITVVLYTLLLAFFGPKMLVFLPIQMAFGWWQLTSANYIEHYGLLREKMADGRYEHQKPHHSWNSNHIVSNLVLFHLQRHSDHHAHPTRSYQSLRDFPGLPALPTGYPGAFLMAMIPQWFRSVMDPKVVNWANGDLSKIQIEDSMRAEYIKKFTHNVGADDKRGATAVAS.

4 consecutive transmembrane segments (helical) span residues 20–40, 42–62, 89–109, and 114–134; these read YFWI…WLAN, TGWG…LPLL, VLTY…AWWV, and MSWF…GLAL. 2 residues coordinate Fe cation: H138 and H142. Residues 146–166 traverse the membrane as a helical segment; sequence AFDRWMAKIVLAVVGYGHFFI. Fe cation contacts are provided by H168, H172, and H173. Residues 236–256 traverse the membrane as a helical segment; that stretch reads VVLYTLLLAFFGPKMLVFLPI. Fe cation is bound by residues H312, H315, and H316.

Belongs to the fatty acid desaturase type 1 family. AlkB subfamily. Requires Fe(3+) as cofactor.

It localises to the cell inner membrane. It carries out the reaction octane + 2 reduced [rubredoxin] + O2 + 2 H(+) = 2 oxidized [rubredoxin] + octan-1-ol + H2O. Its pathway is hydrocarbon metabolism; alkane degradation. Its function is as follows. Catalyzes the hydroxylation of n-alkanes in the presence of a NADH-rubredoxin reductase and rubredoxin. The sequence is that of Alkane 1-monooxygenase (alkB) from Pseudomonas putida (Arthrobacter siderocapsulatus).